A 352-amino-acid chain; its full sequence is Coproporphyrin III ferrochelatase (352 aa).

S52 and Y121 together coordinate Fe-coproporphyrin III. Fe(2+)-binding residues include H178 and E267.

Belongs to the ferrochelatase family.

The protein resides in the cytoplasm. It carries out the reaction Fe-coproporphyrin III + 2 H(+) = coproporphyrin III + Fe(2+). Its pathway is porphyrin-containing compound metabolism; protoheme biosynthesis. Involved in coproporphyrin-dependent heme b biosynthesis. Catalyzes the insertion of ferrous iron into coproporphyrin III to form Fe-coproporphyrin III. The polypeptide is Coproporphyrin III ferrochelatase (Propionibacterium freudenreichii subsp. freudenreichii).